The sequence spans 402 residues: F-box/kelch-repeat protein At4g39590 (402 aa).

Low complexity predominate over residues 1–14; sequence MFPMSSTSRSSAAN. The segment at 1 to 37 is disordered; it reads MFPMSSTSRSSAANNRKDPPRKKNKETPSPVTREPTS. The span at 27-37 shows a compositional bias: polar residues; the sequence is TPSPVTREPTS. Residues 35-81 form the F-box domain; that stretch reads PTSIDSLPNDLLLNCFARVSRMYYPALSRVSKRFRSIVTSPEIYNTR. 4 Kelch repeats span residues 143–198, 199–246, 255–300, and 302–341; these read NIYR…VVDG, KIYV…YRRA, KLYL…LFYW, and QGVF…DLGG.

The chain is F-box/kelch-repeat protein At4g39590 from Arabidopsis thaliana (Mouse-ear cress).